Here is a 131-residue protein sequence, read N- to C-terminus: Small ribosomal subunit protein uS8 (131 aa).

This sequence belongs to the universal ribosomal protein uS8 family. Part of the 30S ribosomal subunit. Contacts proteins S5 and S12.

Functionally, one of the primary rRNA binding proteins, it binds directly to 16S rRNA central domain where it helps coordinate assembly of the platform of the 30S subunit. The sequence is that of Small ribosomal subunit protein uS8 from Azobacteroides pseudotrichonymphae genomovar. CFP2.